The sequence spans 375 residues: Erythronate-4-phosphate dehydrogenase (375 aa).

2 residues coordinate substrate: serine 45 and threonine 67. Aspartate 147 is a binding site for NAD(+). Residue arginine 209 is part of the active site. Aspartate 233 provides a ligand contact to NAD(+). Glutamate 238 is a catalytic residue. Histidine 255 (proton donor) is an active-site residue. Glycine 258 is an NAD(+) binding site. A substrate-binding site is contributed by tyrosine 259.

This sequence belongs to the D-isomer specific 2-hydroxyacid dehydrogenase family. PdxB subfamily. As to quaternary structure, homodimer.

It localises to the cytoplasm. The catalysed reaction is 4-phospho-D-erythronate + NAD(+) = (R)-3-hydroxy-2-oxo-4-phosphooxybutanoate + NADH + H(+). It functions in the pathway cofactor biosynthesis; pyridoxine 5'-phosphate biosynthesis; pyridoxine 5'-phosphate from D-erythrose 4-phosphate: step 2/5. In terms of biological role, catalyzes the oxidation of erythronate-4-phosphate to 3-hydroxy-2-oxo-4-phosphonooxybutanoate. The protein is Erythronate-4-phosphate dehydrogenase of Shewanella amazonensis (strain ATCC BAA-1098 / SB2B).